Reading from the N-terminus, the 480-residue chain is Glutamyl-tRNA(Gln) amidotransferase subunit A (480 aa).

Catalysis depends on charge relay system residues lysine 74 and serine 149. Serine 173 serves as the catalytic Acyl-ester intermediate.

Belongs to the amidase family. GatA subfamily. In terms of assembly, heterotrimer of A, B and C subunits.

It carries out the reaction L-glutamyl-tRNA(Gln) + L-glutamine + ATP + H2O = L-glutaminyl-tRNA(Gln) + L-glutamate + ADP + phosphate + H(+). In terms of biological role, allows the formation of correctly charged Gln-tRNA(Gln) through the transamidation of misacylated Glu-tRNA(Gln) in organisms which lack glutaminyl-tRNA synthetase. The reaction takes place in the presence of glutamine and ATP through an activated gamma-phospho-Glu-tRNA(Gln). The protein is Glutamyl-tRNA(Gln) amidotransferase subunit A of Ruthia magnifica subsp. Calyptogena magnifica.